A 239-amino-acid chain; its full sequence is Orotidine 5'-phosphate decarboxylase (239 aa).

Residues Asp-15, Lys-37, 64 to 73 (DLKFHDIPNT), Thr-126, Arg-187, Gln-196, Gly-216, and Arg-217 contribute to the substrate site. Lys-66 (proton donor) is an active-site residue.

Belongs to the OMP decarboxylase family. Type 1 subfamily. As to quaternary structure, homodimer.

The enzyme catalyses orotidine 5'-phosphate + H(+) = UMP + CO2. It functions in the pathway pyrimidine metabolism; UMP biosynthesis via de novo pathway; UMP from orotate: step 2/2. Functionally, catalyzes the decarboxylation of orotidine 5'-monophosphate (OMP) to uridine 5'-monophosphate (UMP). This chain is Orotidine 5'-phosphate decarboxylase, found in Geobacter sulfurreducens (strain ATCC 51573 / DSM 12127 / PCA).